Reading from the N-terminus, the 936-residue chain is Isoleucine--tRNA ligase (936 aa).

A 'HIGH' region motif is present at residues 58–68 (PYANGNIHIGH). Position 560 (glutamate 560) interacts with L-isoleucyl-5'-AMP. A 'KMSKS' region motif is present at residues 601–605 (KMSKS). Lysine 604 provides a ligand contact to ATP. Cysteine 899, cysteine 902, cysteine 919, and cysteine 922 together coordinate Zn(2+).

It belongs to the class-I aminoacyl-tRNA synthetase family. IleS type 1 subfamily. In terms of assembly, monomer. The cofactor is Zn(2+).

It is found in the cytoplasm. The enzyme catalyses tRNA(Ile) + L-isoleucine + ATP = L-isoleucyl-tRNA(Ile) + AMP + diphosphate. In terms of biological role, catalyzes the attachment of isoleucine to tRNA(Ile). As IleRS can inadvertently accommodate and process structurally similar amino acids such as valine, to avoid such errors it has two additional distinct tRNA(Ile)-dependent editing activities. One activity is designated as 'pretransfer' editing and involves the hydrolysis of activated Val-AMP. The other activity is designated 'posttransfer' editing and involves deacylation of mischarged Val-tRNA(Ile). In Proteus mirabilis (strain HI4320), this protein is Isoleucine--tRNA ligase.